A 720-amino-acid chain; its full sequence is Catalase-peroxidase (720 aa).

Positions 1-21 (MSENKCPVMHGSATTTENSMA) are cleaved as a signal peptide. Residues 94 to 222 (WHAAGTYRIA…LAAVMMGLIY (129 aa)) constitute a cross-link (tryptophyl-tyrosyl-methioninium (Trp-Tyr) (with M-248)). Catalysis depends on His95, which acts as the Proton acceptor. A cross-link (tryptophyl-tyrosyl-methioninium (Tyr-Met) (with W-94)) is located at residues 222–248 (YVNPEGVDGKPDPLKTAQDIRETFARM). Residue His263 participates in heme b binding.

It belongs to the peroxidase family. Peroxidase/catalase subfamily. In terms of assembly, homodimer or homotetramer. It depends on heme b as a cofactor. In terms of processing, formation of the three residue Trp-Tyr-Met cross-link is important for the catalase, but not the peroxidase activity of the enzyme.

It carries out the reaction H2O2 + AH2 = A + 2 H2O. The catalysed reaction is 2 H2O2 = O2 + 2 H2O. In terms of biological role, bifunctional enzyme with both catalase and broad-spectrum peroxidase activity. This is Catalase-peroxidase from Shewanella denitrificans (strain OS217 / ATCC BAA-1090 / DSM 15013).